The following is a 256-amino-acid chain: Leucine-rich repeat-containing protein 18 (256 aa).

8 LRR repeats span residues 28–49 (GRKR…ILRL), 51–72 (EIDE…ISKF), 74–95 (NLRW…IGQM), 97–118 (SLLF…VELN), 122–144 (NIRT…GALK), 145–167 (ELHE…SKLP), 168–189 (KLKK…DMFV), and 194–215 (RLEN…QKCQ).

The protein resides in the cytoplasm. May be involved in the regulation of spermatogenesis and sperm maturation. This chain is Leucine-rich repeat-containing protein 18 (Lrrc18), found in Rattus norvegicus (Rat).